Here is a 323-residue protein sequence, read N- to C-terminus: D-alanine--D-alanine ligase (323 aa).

Residues 120–319 (LSVLKPYGIK…LEDLFTNAIE (200 aa)) form the ATP-grasp domain. 148 to 203 (VKKVGLPCFVKPNKAGSSFGISKVKSEAELPIAIEVAYKEDNEIIIESFLDGTEVS) lines the ATP pocket. Mg(2+) contacts are provided by Glu-274, Glu-286, and Asn-288.

The protein belongs to the D-alanine--D-alanine ligase family. The cofactor is Mg(2+). Requires Mn(2+) as cofactor.

The protein resides in the cytoplasm. The enzyme catalyses 2 D-alanine + ATP = D-alanyl-D-alanine + ADP + phosphate + H(+). It functions in the pathway cell wall biogenesis; peptidoglycan biosynthesis. Functionally, cell wall formation. The polypeptide is D-alanine--D-alanine ligase (Flavobacterium johnsoniae (strain ATCC 17061 / DSM 2064 / JCM 8514 / BCRC 14874 / CCUG 350202 / NBRC 14942 / NCIMB 11054 / UW101) (Cytophaga johnsonae)).